The chain runs to 893 residues: Serine/threonine-protein kinase/endoribonuclease IRE1 (893 aa).

The N-terminal stretch at 1–19 (MRSLRRVLLQLVLLAGVAF) is a signal peptide. Over 20–379 (RGVRFDDAAD…NSVTKFSYRW (360 aa)) the chain is Lumenal. N-linked (GlcNAc...) asparagine glycosylation is found at N105, N158, N259, and N351. Residues 380–397 (LFPTFLMLLIMACLVKLA) form a helical membrane-spanning segment. At 398–893 (DASKYCRQFV…FSKYFLGSSA (496 aa)) the chain is on the cytoplasmic side. The disordered stretch occupies residues 451 to 478 (ASDKEGNGTGGSTEAQSNKAHDSTNVEL). The Protein kinase domain occupies 491 to 759 (CVYSKEIGKG…AVYVMHHPFF (269 aa)). Residues 497–505 (IGKGSNGTV) and K519 each bind ATP. Residue D625 is the Proton acceptor of the active site. The KEN domain occupies 762 to 890 (PELCLSFLRD…EEAFSKYFLG (129 aa)).

Belongs to the protein kinase superfamily. Ser/Thr protein kinase family. Homodimer; disulfide-linked. Dimer formation is driven by hydrophobic interactions within the N-terminal luminal domains and stabilized by disulfide bridges. In terms of processing, autophosphorylated. In terms of tissue distribution, expressed in roots, nodes, internodes, leaf sheaths, leaf blades, young ears and mature ears.

It is found in the endoplasmic reticulum membrane. The enzyme catalyses L-seryl-[protein] + ATP = O-phospho-L-seryl-[protein] + ADP + H(+). It catalyses the reaction L-threonyl-[protein] + ATP = O-phospho-L-threonyl-[protein] + ADP + H(+). In terms of biological role, involved in endoplasmic reticulum (ER) stress response. Senses unfolded proteins in the lumen of the ER via its N-terminal domain which leads to enzyme auto-activation. The active endoribonuclease domain splices bZIP50 mRNA to generate a new C-terminus, converting it into a potent unfolded-protein response (UPR) transcriptional activator, which then induces transcription of UPR target genes, such as luminal-binding protein (BiP) chaperones. The sequence is that of Serine/threonine-protein kinase/endoribonuclease IRE1 from Oryza sativa subsp. japonica (Rice).